The following is a 764-amino-acid chain: Nucleolar transcription factor 1 (764 aa).

Met-1 is modified (N-acetylmethionine). Residues 1-21 (MNGEADCPTDLEMAAPKGQDR) form a disordered region. 2 DNA-binding regions (HMG box) span residues 112–180 (PKKP…ARFR) and 196–264 (PEKP…RDYI). A Phosphothreonine modification is found at Thr-201. Phosphoserine is present on residues Ser-273, Ser-336, and Ser-364. The HMG box 3 DNA-binding region spans 298 to 362 (TKPPPNSYSL…DYEVELLRFL (65 aa)). The span at 370-379 (QQRVLGEEKM) shows a compositional bias: basic and acidic residues. The disordered stretch occupies residues 370–411 (QQRVLGEEKMLNINKKQTTSPASKKPSQEGGKGGSEKPKRPV). Phosphoserine occurs at positions 389, 412, 433, 435, 484, 495, 546, 584, and 638. 3 consecutive DNA-binding regions (HMG box) follow at residues 407-475 (PKRP…GGER), 482-549 (PESP…SEMR), and 568-634 (KKPP…DLWV). The segment at 456 to 488 (YKAREAALKAQSERKPGGEREDRGKLPESPKRA) is disordered. A compositionally biased stretch (basic and acidic residues) spans 457-488 (KAREAALKAQSERKPGGEREDRGKLPESPKRA). Residues 546–576 (SEMRAPPAATNSSKKMKFQGEPKKPPMNGYQ) form a disordered region. Residues 648 to 764 (YISNKRKNMT…SGDSSDSDSN (117 aa)) are disordered. A compositionally biased stretch (polar residues) spans 664 to 674 (PKSSRTTLQSK). The segment covering 677-745 (SEEDDDEEDD…DDDEDEDNES (69 aa)) has biased composition (acidic residues). Residues 746-758 (EGSSSSSSSSGDS) show a composition bias toward low complexity.

In terms of assembly, homodimer. Part of Pol I pre-initiation complex (PIC), in which Pol I core assembles with RRN3 and promoter-bound UTBF and SL1/TIF-IB complex. Interacts with TOP2A in the context of Pol I complex. Interacts with TBP. Interacts with TAF1A. Interacts with PHF6. Interacts with CEBPA (isoform 1 and isoform 4). Interacts with DDX11. Interacts with NOP53. Interacts with RASL11A. Interacts with DHX33. Binds to IRS1 and PIK3CA. Interacts with ALKBH2. In terms of processing, phosphorylated and activated by PIK3CA.

Its subcellular location is the nucleus. It localises to the nucleolus. Functionally, recognizes the ribosomal RNA gene promoter and activates transcription mediated by RNA polymerase I through cooperative interactions with the transcription factor SL1/TIF-IB complex. It binds specifically to the upstream control element. This is Nucleolar transcription factor 1 (Ubtf) from Rattus norvegicus (Rat).